We begin with the raw amino-acid sequence, 584 residues long: uncharacterized protein (584 aa).

PbH1 repeat units lie at residues Q100–H128, C139–P161, S173–G195, C196–G225, P236–G266, T313–R333, G334–Q356, S357–A382, G406–Q427, N456–T478, and S529–T554.

This is an uncharacterized protein from Bacillus subtilis (strain 168).